We begin with the raw amino-acid sequence, 319 residues long: MATVEVLTSEVVAPAEETPAGAVWLSNLDLAARRGYTPTVYFYRRNGDDEAAFFAADAVRDGLARALVPFYPLAGRLGLAGGGEDGRVQIDCTGEGAVFVTARSGHYALDDLMNEFVPCDEMRDLFVPPTPPPNPPCALLLVQVTHLRCGGVVLGMALHHSVVDARSAAHFAETWASIVRGAPAGDAPVPPCFDHKLLAARPARAVLYDHPEYKPEPAPAPAHAATASTYASAIITLTKQQVGALKAACAGASTFRAVVALVWQCACRARSLPPDKANLFLLYKYISEDWVDIQLNIQQRDNCIYAPTLKANCCFTPTF.

Catalysis depends on proton acceptor residues H160 and D301.

Belongs to the plant acyltransferase family.

In terms of biological role, hydroxycinnamoyl transferase that catalyzes the transfer of an acyl from p-coumaryol-CoA to putrescine, to produce coumaroyl putrescine. The polypeptide is Putrescine hydroxycinnamoyltransferase 2 (Oryza sativa subsp. japonica (Rice)).